Here is a 385-residue protein sequence, read N- to C-terminus: Chaperone protein DnaJ (385 aa).

Residues 5-70 form the J domain; the sequence is DYYEVLGVSK…DKKAAYDRFG (66 aa). The CR-type zinc-finger motif lies at 143-221; that stretch reads GLSKQITVPS…CGGAGRQEKD (79 aa). Positions 156, 159, 173, 176, 195, 198, 209, and 212 each coordinate Zn(2+). CXXCXGXG motif repeat units lie at residues 156–163, 173–180, 195–202, and 209–216; these read CSSCDGTG, CPTCSGMG, CPTCNGMG, and CRTCGGAG. Positions 299–323 are disordered; the sequence is GGRSRVRVPEGSQSGRQMRLRGKGM.

It belongs to the DnaJ family. Homodimer. Zn(2+) serves as cofactor.

It localises to the cytoplasm. Its function is as follows. Participates actively in the response to hyperosmotic and heat shock by preventing the aggregation of stress-denatured proteins and by disaggregating proteins, also in an autonomous, DnaK-independent fashion. Unfolded proteins bind initially to DnaJ; upon interaction with the DnaJ-bound protein, DnaK hydrolyzes its bound ATP, resulting in the formation of a stable complex. GrpE releases ADP from DnaK; ATP binding to DnaK triggers the release of the substrate protein, thus completing the reaction cycle. Several rounds of ATP-dependent interactions between DnaJ, DnaK and GrpE are required for fully efficient folding. Also involved, together with DnaK and GrpE, in the DNA replication of plasmids through activation of initiation proteins. The sequence is that of Chaperone protein DnaJ from Jannaschia sp. (strain CCS1).